Reading from the N-terminus, the 211-residue chain is Small ribosomal subunit protein eS8 (211 aa).

Belongs to the eukaryotic ribosomal protein eS8 family.

In Dictyostelium discoideum (Social amoeba), this protein is Small ribosomal subunit protein eS8 (rps8).